A 131-amino-acid chain; its full sequence is Transcription antitermination protein NusB (131 aa).

This sequence belongs to the NusB family.

Involved in transcription antitermination. Required for transcription of ribosomal RNA (rRNA) genes. Binds specifically to the boxA antiterminator sequence of the ribosomal RNA (rrn) operons. This Campylobacter hominis (strain ATCC BAA-381 / DSM 21671 / CCUG 45161 / LMG 19568 / NCTC 13146 / CH001A) protein is Transcription antitermination protein NusB.